An 89-amino-acid chain; its full sequence is UPF0223 protein BPUM_1362 (89 aa).

Belongs to the UPF0223 family.

The sequence is that of UPF0223 protein BPUM_1362 from Bacillus pumilus (strain SAFR-032).